The chain runs to 465 residues: Siroheme synthase (465 aa).

Positions 1-203 (MDFLPLFHSL…GRPAEAERLL (203 aa)) are precorrin-2 dehydrogenase /sirohydrochlorin ferrochelatase. Residues 22-23 (EV) and 43-44 (PQ) each bind NAD(+). Position 128 is a phosphoserine (Ser-128). A uroporphyrinogen-III C-methyltransferase region spans residues 217–465 (GEVYLVGAGP…AWFEGAREDA (249 aa)). Pro-226 lines the S-adenosyl-L-methionine pocket. The active-site Proton acceptor is Asp-249. Lys-271 (proton donor) is an active-site residue. S-adenosyl-L-methionine-binding positions include 302–304 (GGD), Ile-307, 332–333 (TA), Met-384, and Gly-413.

In the N-terminal section; belongs to the precorrin-2 dehydrogenase / sirohydrochlorin ferrochelatase family. The protein in the C-terminal section; belongs to the precorrin methyltransferase family.

The enzyme catalyses uroporphyrinogen III + 2 S-adenosyl-L-methionine = precorrin-2 + 2 S-adenosyl-L-homocysteine + H(+). The catalysed reaction is precorrin-2 + NAD(+) = sirohydrochlorin + NADH + 2 H(+). It carries out the reaction siroheme + 2 H(+) = sirohydrochlorin + Fe(2+). Its pathway is cofactor biosynthesis; adenosylcobalamin biosynthesis; precorrin-2 from uroporphyrinogen III: step 1/1. It participates in cofactor biosynthesis; adenosylcobalamin biosynthesis; sirohydrochlorin from precorrin-2: step 1/1. It functions in the pathway porphyrin-containing compound metabolism; siroheme biosynthesis; precorrin-2 from uroporphyrinogen III: step 1/1. The protein operates within porphyrin-containing compound metabolism; siroheme biosynthesis; siroheme from sirohydrochlorin: step 1/1. Its pathway is porphyrin-containing compound metabolism; siroheme biosynthesis; sirohydrochlorin from precorrin-2: step 1/1. Multifunctional enzyme that catalyzes the SAM-dependent methylations of uroporphyrinogen III at position C-2 and C-7 to form precorrin-2 via precorrin-1. Then it catalyzes the NAD-dependent ring dehydrogenation of precorrin-2 to yield sirohydrochlorin. Finally, it catalyzes the ferrochelation of sirohydrochlorin to yield siroheme. This is Siroheme synthase from Pseudomonas aeruginosa (strain ATCC 15692 / DSM 22644 / CIP 104116 / JCM 14847 / LMG 12228 / 1C / PRS 101 / PAO1).